The following is a 231-amino-acid chain: uncharacterized protein (231 aa).

Position 10–34 (10–34 (IITGASSGIGAATAKALEKQGVKVV)) interacts with NADP(+). Residue serine 140 participates in substrate binding. Tyrosine 153 functions as the Proton acceptor in the catalytic mechanism.

This sequence belongs to the short-chain dehydrogenases/reductases (SDR) family.

This is an uncharacterized protein from Staphylococcus haemolyticus (strain JCSC1435).